We begin with the raw amino-acid sequence, 67 residues long: Protein AaeX (67 aa).

The next 2 membrane-spanning stretches (helical) occupy residues 8–28 (VLFG…LPLF) and 47–67 (PALF…WLFI).

The protein belongs to the AaeX family.

It localises to the cell membrane. The sequence is that of Protein AaeX from Edwardsiella piscicida.